Consider the following 83-residue polypeptide: Alpha-conotoxin QcIA (83 aa).

An N-terminal signal peptide occupies residues 1–21 (MGMRMMFTLFLLAVLSTTVVS). Residues 22-48 (FTLDRASNGRDAAADSKAADQIAQTVR) constitute a propeptide that is removed on maturation. Cystine bridges form between Cys-51–Cys-57 and Cys-52–Cys-65. The segment at 53–55 (SNP) is ser-Xaa-Pro motif, crucial for potent interaction with nAChR. Residues 66–83 (RRTLMLQNPLNHDMSPSA) constitute a propeptide that is removed on maturation.

It belongs to the conotoxin A superfamily. In terms of tissue distribution, expressed by the venom duct.

It localises to the secreted. In terms of biological role, alpha-conotoxins bind to the nicotinic acetylcholine receptors (nAChR) and inhibit them. A synthetic amidated version of this toxin potently and preferentially antagonizes neuronal rat alpha-3-beta-2 (IC(50)=55.7 nM) and alpha-6/alpha-3-beta-4 (IC(50)=90.69 nM) nAChRs. This chain is Alpha-conotoxin QcIA, found in Conus quercinus (Oak cone).